The chain runs to 178 residues: Single-stranded DNA-binding protein 2 (178 aa).

One can recognise an SSB domain in the interval 6–111 (VNKVILVGNL…VVVSQSGTMQ (106 aa)). A DNA-binding region spans residues 55 to 61 (WHRVVLY). The disordered stretch occupies residues 111–161 (QMLGGRNSAGSGQQQGGWGQPQQPAAPSHSGMPPQQHPANEPPMDFDDDIP).

In terms of assembly, homotetramer.

The chain is Single-stranded DNA-binding protein 2 (ssb2) from Salmonella typhi.